Here is a 90-residue protein sequence, read N- to C-terminus: MPNKPIRLPPLKQLRVRQANKAEENPCIAVMSSVLACWASAGYNSAGCATVENALRACMDAPKPAPKPNNTINYHLSRFQERLTQGKSKK.

Cys-27 and Cys-58 are joined by a disulfide.

Belongs to the mitochondrion-specific ribosomal protein mS37 family. In terms of assembly, component of the mitochondrial small ribosomal subunit (mt-SSU). Mature N.crassa 74S mitochondrial ribosomes consist of a small (37S) and a large (54S) subunit. The 37S small subunit contains a 16S ribosomal RNA (16S mt-rRNA) and 32 different proteins. The 54S large subunit contains a 23S rRNA (23S mt-rRNA) and 42 different proteins.

It localises to the mitochondrion. Component of the mitochondrial ribosome (mitoribosome), a dedicated translation machinery responsible for the synthesis of mitochondrial genome-encoded proteins, including at least some of the essential transmembrane subunits of the mitochondrial respiratory chain. The mitoribosomes are attached to the mitochondrial inner membrane and translation products are cotranslationally integrated into the membrane. This is Small ribosomal subunit protein mS37 (mrp10) from Neurospora crassa (strain ATCC 24698 / 74-OR23-1A / CBS 708.71 / DSM 1257 / FGSC 987).